Consider the following 199-residue polypeptide: Recombination protein RecR (199 aa).

The C4-type zinc-finger motif lies at 58 to 73 (CLNCGNIGTSDICDIC). The region spanning 81-176 (GEICVVEDVA…AVTSLAQGVP (96 aa)) is the Toprim domain.

The protein belongs to the RecR family.

May play a role in DNA repair. It seems to be involved in an RecBC-independent recombinational process of DNA repair. It may act with RecF and RecO. The polypeptide is Recombination protein RecR (Dinoroseobacter shibae (strain DSM 16493 / NCIMB 14021 / DFL 12)).